We begin with the raw amino-acid sequence, 484 residues long: Glutamyl-tRNA(Gln) amidotransferase subunit A (484 aa).

Active-site charge relay system residues include lysine 76 and serine 151. Serine 175 (acyl-ester intermediate) is an active-site residue.

This sequence belongs to the amidase family. GatA subfamily. In terms of assembly, heterotrimer of A, B and C subunits.

The catalysed reaction is L-glutamyl-tRNA(Gln) + L-glutamine + ATP + H2O = L-glutaminyl-tRNA(Gln) + L-glutamate + ADP + phosphate + H(+). Functionally, allows the formation of correctly charged Gln-tRNA(Gln) through the transamidation of misacylated Glu-tRNA(Gln) in organisms which lack glutaminyl-tRNA synthetase. The reaction takes place in the presence of glutamine and ATP through an activated gamma-phospho-Glu-tRNA(Gln). The protein is Glutamyl-tRNA(Gln) amidotransferase subunit A of Saccharophagus degradans (strain 2-40 / ATCC 43961 / DSM 17024).